A 226-amino-acid chain; its full sequence is MSRIYHDGALRNKAVQSVRLPGAWDPAAHQGGNGVLLEGELIDVSRHSILDTHGRKERYYVLYIRPSHIHRRKFDAKGNEIEPNFSATRKVNTGFLMSSYKVEAKGDTDRLTPEALKGLVNKPELLALTESLTPDHTVAFWMPESEMEVMELELGAGVRLKTRGDGPFLDSLAKLEAGTVTKCNFTGDGKTGASWTDNIMAQKCSKGAAAEIREQGDGAEDEEWDD.

The tract at residues 211-226 is necessary and sufficient for interaction with ARPC2; it reads EIREQGDGAEDEEWDD.

Belongs to the Arpin family. Associates with the Arp2/3 complex. Interacts with ARPC2; enhanced by activated RAC1. Interacts with ARPC5; the interaction is dependent on RAC1.

Its subcellular location is the cell projection. It localises to the lamellipodium. Its function is as follows. Regulates actin polymerization by inhibiting the actin-nucleating activity of the Arp2/3 complex; the function is competitive with nucleation promoting factors. Participates in an incoherent feedforward loop at the lamellipodium tip where it inhibits the ARP2/2 complex in response to Rac signaling and where Rac also stimulates actin polymerization through the WAVE complex. Involved in steering cell migration by controlling its directional persistence. This Homo sapiens (Human) protein is Arpin (ARPIN).